We begin with the raw amino-acid sequence, 261 residues long: Ribosomal RNA small subunit methyltransferase A (261 aa).

The S-adenosyl-L-methionine site is built by asparagine 11, leucine 13, glycine 38, glutamate 59, aspartate 84, and serine 106.

Belongs to the class I-like SAM-binding methyltransferase superfamily. rRNA adenine N(6)-methyltransferase family. RsmA subfamily.

It localises to the cytoplasm. The catalysed reaction is adenosine(1518)/adenosine(1519) in 16S rRNA + 4 S-adenosyl-L-methionine = N(6)-dimethyladenosine(1518)/N(6)-dimethyladenosine(1519) in 16S rRNA + 4 S-adenosyl-L-homocysteine + 4 H(+). Functionally, specifically dimethylates two adjacent adenosines (A1518 and A1519) in the loop of a conserved hairpin near the 3'-end of 16S rRNA in the 30S particle. May play a critical role in biogenesis of 30S subunits. The sequence is that of Ribosomal RNA small subunit methyltransferase A from Wigglesworthia glossinidia brevipalpis.